A 312-amino-acid chain; its full sequence is Ribosomal protein L11 methyltransferase (312 aa).

Residues threonine 162, glycine 183, aspartate 205, and asparagine 248 each coordinate S-adenosyl-L-methionine.

It belongs to the methyltransferase superfamily. PrmA family.

It is found in the cytoplasm. The catalysed reaction is L-lysyl-[protein] + 3 S-adenosyl-L-methionine = N(6),N(6),N(6)-trimethyl-L-lysyl-[protein] + 3 S-adenosyl-L-homocysteine + 3 H(+). Methylates ribosomal protein L11. This chain is Ribosomal protein L11 methyltransferase, found in Bacillus cereus (strain ATCC 10987 / NRS 248).